A 479-amino-acid polypeptide reads, in one-letter code: Cardiolipin synthase A (479 aa).

A run of 2 helical transmembrane segments spans residues 8–28 (FFGY…LHAV) and 38–58 (IAWA…YLIF). PLD phosphodiesterase domains follow at residues 218-245 (VNFR…GDEY) and 392-419 (QPGF…DNRS). Catalysis depends on residues H223, K225, D230, H397, K399, and D404.

This sequence belongs to the phospholipase D family. Cardiolipin synthase subfamily. ClsA sub-subfamily.

Its subcellular location is the cell inner membrane. It catalyses the reaction 2 a 1,2-diacyl-sn-glycero-3-phospho-(1'-sn-glycerol) = a cardiolipin + glycerol. In terms of biological role, catalyzes the reversible phosphatidyl group transfer from one phosphatidylglycerol molecule to another to form cardiolipin (CL) (diphosphatidylglycerol) and glycerol. The chain is Cardiolipin synthase A from Pseudomonas entomophila (strain L48).